Reading from the N-terminus, the 238-residue chain is Major prion protein (238 aa).

Residues 1–15 (MLVLFVATWSDLGLC) form the signal peptide. Residues 16–215 (KKRPKPGGWN…ESQAYYQRGS (200 aa)) form an interaction with GRB2, ERI3 and SYN1 region. The tract at residues 18-93 (RPKPGGWNTG…WHKPSKPKTS (76 aa)) is disordered. A run of 4 repeats spans residues 44 to 52 (PQGGGGWGQ), 53 to 60 (PHGGGWGQ), 61 to 68 (PHGGGWGQ), and 69 to 76 (PHGGGWGQ). Residues 44–83 (PQGGGGWGQPHGGGWGQPHGGGWGQPHGGGWGQGGGTHNQ) form a 4 X 8 AA tandem repeats of P-H-G-G-G-W-G-Q region. Positions 45–80 (QGGGGWGQPHGGGWGQPHGGGWGQPHGGGWGQGGGT) are enriched in gly residues. Residues Gly-47, Gly-48, His-54, Gly-55, Gly-56, His-62, Gly-63, Gly-64, His-70, Gly-71, and Gly-72 each contribute to the Cu(2+) site. Over residues 83–93 (QWHKPSKPKTS) the composition is skewed to basic residues. Cys-164 and Cys-199 are joined by a disulfide. N-linked (GlcNAc...) asparagine glycans are attached at residues Asn-166 and Asn-182. The GPI-anchor amidated serine moiety is linked to residue Ser-215. Positions 216 to 238 (SIVLFSSPPVILLISFLIFLIVG) are cleaved as a propeptide — removed in mature form.

Belongs to the prion family. As to quaternary structure, monomer and homodimer. Has a tendency to aggregate into amyloid fibrils containing a cross-beta spine, formed by a steric zipper of superposed beta-strands. Soluble oligomers may represent an intermediate stage on the path to fibril formation. Copper binding may promote oligomerization. Interacts with GRB2, APP, ERI3/PRNPIP and SYN1. Mislocalized cytosolically exposed PrP interacts with MGRN1; this interaction alters MGRN1 subcellular location and causes lysosomal enlargement. Interacts with KIAA1191.

The protein localises to the cell membrane. It is found in the golgi apparatus. Functionally, its primary physiological function is unclear. Has cytoprotective activity against internal or environmental stresses. May play a role in neuronal development and synaptic plasticity. May be required for neuronal myelin sheath maintenance. May play a role in iron uptake and iron homeostasis. Soluble oligomers are toxic to cultured neuroblastoma cells and induce apoptosis (in vitro). Association with GPC1 (via its heparan sulfate chains) targets PRNP to lipid rafts. Also provides Cu(2+) or Zn(2+) for the ascorbate-mediated GPC1 deaminase degradation of its heparan sulfate side chains. The polypeptide is Major prion protein (PRNP) (Theropithecus gelada (Gelada baboon)).